Reading from the N-terminus, the 337-residue chain is Trace amine-associated receptor 5 (337 aa).

Residues 1–38 (MRAVLLPGSGEQPAAFCYQVNGSCPRTVHPLAIRVLIY) lie on the Extracellular side of the membrane. Asparagine 21 carries N-linked (GlcNAc...) asparagine glycosylation. 2 disulfide bridges follow: cysteine 24–cysteine 188 and cysteine 99–cysteine 192. The helical transmembrane segment at 39 to 59 (LACAVGMLITVLGNLFVVFAV) threads the bilayer. Over 60–70 (SYFKVLHTPTN) the chain is Cytoplasmic. The helical transmembrane segment at 71-91 (FLLLSLALADMLLGLLVLPLS) threads the bilayer. Over 92 to 109 (TVRSVESCWFFGDFLCRL) the chain is Extracellular. Residues 110–130 (HTYLDTLFCLTSIFHLCFISI) form a helical membrane-spanning segment. Topologically, residues 131 to 154 (DRHCAICDPLLYPSKFTVRIALRY) are cytoplasmic. The helical transmembrane segment at 155-175 (IAAGWGIPAAYTAFFLYTDVV) threads the bilayer. The interval 176–189 (ERALSQWLEEMPCV) is extracellular Loop 2 (ECL2). At 176-204 (ERALSQWLEEMPCVGSCQLLFNKFWGWLN) the chain is on the extracellular side. The chain crosses the membrane as a helical span at residues 205-225 (FPAFFIPCLIMISLYLKIFVV). Residues 226-253 (ATRQAQQIRTLSQSLSGAVKRERKAAKT) lie on the Cytoplasmic side of the membrane. The helical transmembrane segment at 254–274 (LGIAVGIYLVCWLPFTVDTLV) threads the bilayer. Over 275 to 284 (DSLLNFVTPP) the chain is Extracellular. Residues 285-307 (LVFDIFIWFAYFNSACNPIIYVF) form a helical membrane-spanning segment. At 308 to 337 (SYRWFRKALKLLLSREILSPRTQTADLFHD) the chain is on the cytoplasmic side.

It belongs to the G-protein coupled receptor 1 family.

The protein resides in the cell membrane. Functionally, olfactory receptor specific for trimethylamine, a trace amine enriched in the urine of male rats, playing a role in social behavior. Also activated by N-methylpiperidine. Trimethylamine is present at high concentration in the urine of male after puberty and acts as an attractant. Trimethylamine-binding causes a conformation change that triggers signaling via G(s)-class of G alpha proteins (GNAL or GNAS). Also required to provide olfactory input into limbic brain areas to regulate emotional behaviors likely via modulation of the serotonin system. In Rattus norvegicus (Rat), this protein is Trace amine-associated receptor 5.